The chain runs to 268 residues: Zinc finger protein SNAI2 (268 aa).

Residues 1–20 (MPRSFLVKKHFNASKKPNYS) form an SNAG domain region. The disordered stretch occupies residues 84–116 (GRVSPLPSSDTSSKDHSGSESPISDEEERLQPK). 4 consecutive C2H2-type zinc fingers follow at residues 128–150 (FQCN…KQLH), 159–181 (FSCK…IRTH), 185–207 (CVCK…IRTH), and 213–235 (FSCP…LQTH). The C2H2-type 5; atypical zinc finger occupies 241–264 (YQCKNCSKTFSRMSLLHKHEESGC).

This sequence belongs to the snail C2H2-type zinc-finger protein family. In terms of assembly, interacts (via SNAG domain) with LIMD1 (via LIM domains), WTIP (via LIM domains) and AJUBA (via LIM domains). Interacts (via zinc fingers) with KPNA2, KPNB1 and TNPO1. May interact (via zinc fingers) with IPO7. Post-translationally, phosphorylated by GSK3B. Once phosphorylated, it becomes a target for ubiquitination. In terms of processing, ubiquitinated by the SCF(FBXO11) complex; ubiquitination requires previous GSK3B-mediated SNAI2 phosphorylation.

It localises to the nucleus. The protein resides in the cytoplasm. Functionally, transcriptional repressor that modulates both activator-dependent and basal transcription. Involved in the generation and migration of neural crest cells. Plays a role in mediating RAF1-induced transcriptional repression of the TJ protein, occludin (OCLN) and subsequent oncogenic transformation of epithelial cells. Represses BRCA2 expression by binding to its E2-box-containing silencer and recruiting CTBP1 and HDAC1 in breast cells. In epidermal keratinocytes, binds to the E-box in ITGA3 promoter and represses its transcription. Involved in the regulation of ITGB1 and ITGB4 expression and cell adhesion and proliferation in epidermal keratinocytes. Binds to E-box2 domain of BSG and activates its expression during TGFB1-induced epithelial-mesenchymal transition (EMT) in hepatocytes. Represses E-Cadherin/CDH1 transcription via E-box elements. Involved in osteoblast maturation. Binds to RUNX2 and SOC9 promoters and may act as a positive and negative transcription regulator, respectively, in osteoblasts. Binds to CXCL12 promoter via E-box regions in mesenchymal stem cells and osteoblasts. Plays an essential role in TWIST1-induced EMT and its ability to promote invasion and metastasis. This chain is Zinc finger protein SNAI2 (Snai2), found in Rattus norvegicus (Rat).